We begin with the raw amino-acid sequence, 273 residues long: Diaminopimelate epimerase (273 aa).

Substrate is bound by residues N11 and N60. The active-site Proton donor is C69. Substrate contacts are provided by residues 70 to 71 (GN), N181, and 199 to 200 (ER). The Proton acceptor role is filled by C209. Position 210-211 (210-211 (GT)) interacts with substrate.

Belongs to the diaminopimelate epimerase family. Homodimer.

It localises to the cytoplasm. The catalysed reaction is (2S,6S)-2,6-diaminopimelate = meso-2,6-diaminopimelate. It functions in the pathway amino-acid biosynthesis; L-lysine biosynthesis via DAP pathway; DL-2,6-diaminopimelate from LL-2,6-diaminopimelate: step 1/1. Catalyzes the stereoinversion of LL-2,6-diaminopimelate (L,L-DAP) to meso-diaminopimelate (meso-DAP), a precursor of L-lysine and an essential component of the bacterial peptidoglycan. The protein is Diaminopimelate epimerase of Helicobacter pylori (strain ATCC 700392 / 26695) (Campylobacter pylori).